Here is a 286-residue protein sequence, read N- to C-terminus: Pyridoxal kinase PdxY (286 aa).

Substrate is bound by residues Ser-9 and 44 to 45 (MQ). ATP contacts are provided by Asp-111, Glu-147, and Lys-180. Asp-221 contributes to the substrate binding site.

This sequence belongs to the pyridoxine kinase family. PdxY subfamily. In terms of assembly, homodimer. Requires Mg(2+) as cofactor.

The catalysed reaction is pyridoxal + ATP = pyridoxal 5'-phosphate + ADP + H(+). Its pathway is cofactor metabolism; pyridoxal 5'-phosphate salvage; pyridoxal 5'-phosphate from pyridoxal: step 1/1. Its function is as follows. Pyridoxal kinase involved in the salvage pathway of pyridoxal 5'-phosphate (PLP). Catalyzes the phosphorylation of pyridoxal to PLP. This is Pyridoxal kinase PdxY from Burkholderia lata (strain ATCC 17760 / DSM 23089 / LMG 22485 / NCIMB 9086 / R18194 / 383).